The following is a 488-amino-acid chain: Palmitoleoyl-protein carboxylesterase notum1' (488 aa).

A signal peptide spans 1–19 (MAGTLCVTLLLLLSTIAVG). N-linked (GlcNAc...) asparagine glycosylation occurs at asparagine 90. Residues serine 226, aspartate 334, and histidine 383 each act as charge relay system in the active site.

Belongs to the pectinacetylesterase family. Notum subfamily. In terms of tissue distribution, expressed in the egg and through cleavage to gastrulation stages. Enriched in the animal (prospective ectoderm) and dorsal regions in early gastrula. Shows a dynamic expression during embryogenesis, in particular during neural induction and antero-posterior (AP) patterning.

Its subcellular location is the secreted. The catalysed reaction is [Wnt protein]-O-(9Z)-hexadecenoyl-L-serine + H2O = [Wnt protein]-L-serine + (9Z)-hexadecenoate + H(+). In terms of biological role, carboxylesterase that acts as a key negative regulator of the Wnt signaling pathway by specifically mediating depalmitoleoylation of WNT proteins. Serine palmitoleoylation of WNT proteins is required for efficient binding to frizzled receptors. Functions in the prospective ectoderm and is required for neural induction. The chain is Palmitoleoyl-protein carboxylesterase notum1' from Xenopus laevis (African clawed frog).